The following is a 395-amino-acid chain: Protochlorophyllide reductase B, chloroplastic (395 aa).

The transit peptide at Met1–Ala59 directs the protein to the chloroplast.

This sequence belongs to the short-chain dehydrogenases/reductases (SDR) family. POR subfamily.

It is found in the plastid. Its subcellular location is the chloroplast. It carries out the reaction chlorophyllide a + NADP(+) = protochlorophyllide a + NADPH + H(+). The protein operates within porphyrin-containing compound metabolism; chlorophyll biosynthesis. Functionally, phototransformation of protochlorophyllide (Pchlide) to chlorophyllide (Chlide). This Hordeum vulgare (Barley) protein is Protochlorophyllide reductase B, chloroplastic (PORB).